Reading from the N-terminus, the 48-residue chain is Small polypeptide DEVIL 14 (48 aa).

A helical membrane pass occupies residues 4-23; that stretch reads TVVLRCCTSVTKVRTWKRCS. The segment at 17-48 is required for DVL/RTFL small polypeptide activity; the sequence is RTWKRCSKQIKEQRARLYIIWKCAVFLLSSHD.

This sequence belongs to the DVL/RTFL small polypeptides family.

The protein localises to the cell membrane. In terms of biological role, small polypeptide acting as a regulatory molecule which coordinates cellular responses required for differentiation, growth and development, probably by restricting polar cell proliferation in lateral organs and coordinating socket cell recruitment and differentiation at trichome sites. The polypeptide is Small polypeptide DEVIL 14 (Arabidopsis thaliana (Mouse-ear cress)).